We begin with the raw amino-acid sequence, 106 residues long: N(2)-fixation sustaining protein CowN (106 aa).

Belongs to the CowN family.

Is required to sustain N(2)-dependent growth in the presence of low levels of carbon monoxide (CO). Probably acts by protecting the N(2) fixation ability of the nitrogenase complex, which is inactivated in the presence of CO. In Denitrovibrio acetiphilus (strain DSM 12809 / NBRC 114555 / N2460), this protein is N(2)-fixation sustaining protein CowN.